A 638-amino-acid chain; its full sequence is uncharacterized protein (638 aa).

This is an uncharacterized protein from Bos taurus (Bovine).